We begin with the raw amino-acid sequence, 383 residues long: Pyruvate synthase subunit PorA (383 aa).

In terms of assembly, heterotetramer of one alpha, one beta, one delta and one gamma chain.

It catalyses the reaction 2 oxidized [2Fe-2S]-[ferredoxin] + pyruvate + CoA = 2 reduced [2Fe-2S]-[ferredoxin] + acetyl-CoA + CO2 + H(+). This Methanothermobacter thermautotrophicus (strain ATCC 29096 / DSM 1053 / JCM 10044 / NBRC 100330 / Delta H) (Methanobacterium thermoautotrophicum) protein is Pyruvate synthase subunit PorA (porA).